The following is an 886-amino-acid chain: Methanogenesis regulatory histidine kinase FilI (886 aa).

2 helical membrane passes run Ile-7 to Cys-27 and Val-270 to Leu-290. Positions Leu-290–Gln-344 constitute an HAMP domain. In terms of domain architecture, PAS spans Ser-349–Glu-419. The PAC domain occupies Phe-421–Lys-473. Residues Thr-674 to Pro-886 enclose the Histidine kinase domain. His-677 is subject to Phosphohistidine; by autocatalysis.

Autophosphorylated.

The protein localises to the cell membrane. It catalyses the reaction ATP + protein L-histidine = ADP + protein N-phospho-L-histidine.. Member of the two-component regulatory system FilI/FilRs, which is involved in the regulation of methanogenesis. Autophosphorylates and specifically transfers the phosphoryl group to both FilR1 and FilR2. In terms of biological role, could also catalyze the synthesis of the quorum sensing (QS) signal molecules carboxyl-acyl homoserine lactones (AHLs), which regulate the transition of the cellular morphology from short cells to filaments and of the carbon metabolic flux from biomass formation to methane production. This is Methanogenesis regulatory histidine kinase FilI from Methanothrix harundinacea (strain 6Ac) (Methanosaeta harundinacea).